The primary structure comprises 449 residues: MMLGTEGGEGFVVKVRGLPWSCSADEVQRFFSDCKIQNGAQGIRFIYTREGRPSGEAFVELESEDEVKLALKKDRETMGHRYVEVFKSNNVEMDWVLKHTGPNSPDTANDGFVRLRGLPFGCSKEEIVQFFSGLEIVPNGITLPVDFQGRSTGEAFVQFASQEIAEKALKKHKERIGHRYIEIFKSSRAEVRTHYDPPRKLMAMQRPGPYDRPGAGRGYNSIGRGAGFERMRRGAYGGGYGGYDDYNGYNDGYGFGSDRFGRDLNYCFSGMSDHRYGDGGSTFQSTTGHCVHMRGLPYRATENDIYNFFSPLNPVRVHIEIGPDGRVTGEADVEFATHEDAVAAMSKDKANMQHRYVELFLNSTAGASGGAYEHRYVELFLNSTAGASGGAYGSQMMGGMGLSNQSSYGGPASQQLSGGYGGGYGGQSSMSGYDQVLQENSSDFQSNIA.

Position 1 is an N-acetylmethionine; in Heterogeneous nuclear ribonucleoprotein H; alternate (M1). Position 2 is an N-acetylmethionine; in Heterogeneous nuclear ribonucleoprotein H, N-terminally processed (M2). An RRM 1 domain is found at F11 to N90. S23 is modified (phosphoserine). K35 is covalently cross-linked (Glycyl lysine isopeptide (Lys-Gly) (interchain with G-Cter in SUMO2)). S54 and S63 each carry phosphoserine. Residues K87 and K98 each participate in a glycyl lysine isopeptide (Lys-Gly) (interchain with G-Cter in SUMO2) cross-link. Residues G111–R188 form the RRM 2 domain. Residue R233 is modified to Dimethylated arginine; alternate. At R233 the chain carries Omega-N-methylarginine; alternate. A 1-1 repeat occupies G234–Y249. A 2 X 16 AA Gly-rich approximate repeats region spans residues G234 to Y433. Phosphotyrosine is present on Y246. An RRM 3 domain is found at H289–T364. S310 is modified (phosphoserine). Tandem repeats lie at residues H354–Y372, H374–Y392, and G418–Y433. Residues H354–Y392 are 2 X 19 AA perfect repeats.

In terms of assembly, part of a ternary complex containing FUBP2, PTBP1, PTBP2 and HNRNPH1. Identified in the spliceosome C complex. Interacts with IGF2BP1. Interacts with CUGBP1; the interaction is RNA-dependent. Interacts with MBNL1; the interaction in RNA-independent. As to expression, expressed ubiquitously.

The protein resides in the nucleus. It localises to the nucleoplasm. This protein is a component of the heterogeneous nuclear ribonucleoprotein (hnRNP) complexes which provide the substrate for the processing events that pre-mRNAs undergo before becoming functional, translatable mRNAs in the cytoplasm. Mediates pre-mRNA alternative splicing regulation. Inhibits, together with CUGBP1, insulin receptor (IR) pre-mRNA exon 11 inclusion in myoblast. Binds to the IR RNA. Binds poly(RG). The chain is Heterogeneous nuclear ribonucleoprotein H (HNRNPH1) from Homo sapiens (Human).